The following is an 81-amino-acid chain: MWTFAIVLAFLLIGLDEGEALDGYPLSKNNYCKIYCPNTEVCKDTCKRRAGATDGECRWDGCYCFNVAPDTKMYPGELPCH.

The N-terminal stretch at 1-20 (MWTFAIVLAFLLIGLDEGEA) is a signal peptide. The 61-residue stretch at 21–81 (LDGYPLSKNN…KMYPGELPCH (61 aa)) folds into the LCN-type CS-alpha/beta domain. Disulfide bonds link cysteine 32/cysteine 80, cysteine 36/cysteine 57, cysteine 42/cysteine 62, and cysteine 46/cysteine 64.

Belongs to the long (4 C-C) scorpion toxin superfamily. Sodium channel inhibitor family. Beta subfamily. Expressed by the venom gland.

The protein localises to the secreted. In terms of biological role, alpha toxins bind voltage-independently at site-3 of sodium channels (Nav) and inhibit the inactivation of the activated channels, thereby blocking neuronal transmission. This toxin binds, in vitro, to sodium channels and inhibits the inactivation of the activated channels. Seems not toxic to mice, crickets and sweet-water shrimps. This is Toxin TdNa10 from Tityus discrepans (Venezuelan scorpion).